Consider the following 215-residue polypeptide: RNA pyrophosphohydrolase (215 aa).

The Nudix hydrolase domain occupies 6–149 (GFRPNVGIIL…KRDVYQLALT (144 aa)). A Nudix box motif is present at residues 38–59 (GGIKYGETPMQAMYRELHEETG).

It belongs to the Nudix hydrolase family. RppH subfamily. A divalent metal cation serves as cofactor.

Its function is as follows. Accelerates the degradation of transcripts by removing pyrophosphate from the 5'-end of triphosphorylated RNA, leading to a more labile monophosphorylated state that can stimulate subsequent ribonuclease cleavage. The chain is RNA pyrophosphohydrolase from Burkholderia lata (strain ATCC 17760 / DSM 23089 / LMG 22485 / NCIMB 9086 / R18194 / 383).